The chain runs to 234 residues: 2,3-bisphosphoglycerate-dependent phosphoglycerate mutase (234 aa).

Substrate is bound by residues 10 to 17, 23 to 24, R62, 89 to 92, K100, 116 to 117, and 186 to 187; these read RHGSSIWN, TG, ERHY, RR, and GN. H11 (tele-phosphohistidine intermediate) is an active-site residue. E89 (proton donor/acceptor) is an active-site residue.

The protein belongs to the phosphoglycerate mutase family. BPG-dependent PGAM subfamily. Homodimer.

It carries out the reaction (2R)-2-phosphoglycerate = (2R)-3-phosphoglycerate. Its pathway is carbohydrate degradation; glycolysis; pyruvate from D-glyceraldehyde 3-phosphate: step 3/5. Its function is as follows. Catalyzes the interconversion of 2-phosphoglycerate and 3-phosphoglycerate. The protein is 2,3-bisphosphoglycerate-dependent phosphoglycerate mutase of Wigglesworthia glossinidia brevipalpis.